The sequence spans 207 residues: Dephospho-CoA kinase (207 aa).

One can recognise a DPCK domain in the interval 4–203; sequence VIGLTGGIAS…EEGYIEKPNY (200 aa). 12–17 is an ATP binding site; sequence ASGKST.

Belongs to the CoaE family.

The protein localises to the cytoplasm. It catalyses the reaction 3'-dephospho-CoA + ATP = ADP + CoA + H(+). It functions in the pathway cofactor biosynthesis; coenzyme A biosynthesis; CoA from (R)-pantothenate: step 5/5. Functionally, catalyzes the phosphorylation of the 3'-hydroxyl group of dephosphocoenzyme A to form coenzyme A. In Staphylococcus aureus (strain MRSA252), this protein is Dephospho-CoA kinase.